Consider the following 160-residue polypeptide: 2-C-methyl-D-erythritol 2,4-cyclodiphosphate synthase (160 aa).

A divalent metal cation-binding residues include D12 and H14. 4-CDP-2-C-methyl-D-erythritol 2-phosphate-binding positions include 12–14 (DVH) and 38–39 (HS). A divalent metal cation is bound at residue H46. 4-CDP-2-C-methyl-D-erythritol 2-phosphate-binding positions include 60–62 (DIG), 65–69 (FPDTD), 136–139 (TTTE), F143, and R146.

Belongs to the IspF family. Homotrimer. A divalent metal cation is required as a cofactor.

The catalysed reaction is 4-CDP-2-C-methyl-D-erythritol 2-phosphate = 2-C-methyl-D-erythritol 2,4-cyclic diphosphate + CMP. It participates in isoprenoid biosynthesis; isopentenyl diphosphate biosynthesis via DXP pathway; isopentenyl diphosphate from 1-deoxy-D-xylulose 5-phosphate: step 4/6. Involved in the biosynthesis of isopentenyl diphosphate (IPP) and dimethylallyl diphosphate (DMAPP), two major building blocks of isoprenoid compounds. Catalyzes the conversion of 4-diphosphocytidyl-2-C-methyl-D-erythritol 2-phosphate (CDP-ME2P) to 2-C-methyl-D-erythritol 2,4-cyclodiphosphate (ME-CPP) with a corresponding release of cytidine 5-monophosphate (CMP). In Acinetobacter baumannii (strain AB307-0294), this protein is 2-C-methyl-D-erythritol 2,4-cyclodiphosphate synthase.